We begin with the raw amino-acid sequence, 89 residues long: Large ribosomal subunit protein bL27 (89 aa).

It belongs to the bacterial ribosomal protein bL27 family.

This Bacteroides thetaiotaomicron (strain ATCC 29148 / DSM 2079 / JCM 5827 / CCUG 10774 / NCTC 10582 / VPI-5482 / E50) protein is Large ribosomal subunit protein bL27.